We begin with the raw amino-acid sequence, 402 residues long: 1-deoxy-D-xylulose 5-phosphate reductoisomerase (402 aa).

T10, G11, S12, I13, G36, R37, N38, and N124 together coordinate NADPH. Residue K125 participates in 1-deoxy-D-xylulose 5-phosphate binding. Residue E126 participates in NADPH binding. D150 serves as a coordination point for Mn(2+). S151, E152, S186, and H209 together coordinate 1-deoxy-D-xylulose 5-phosphate. E152 provides a ligand contact to Mn(2+). G215 contacts NADPH. Positions 222, 227, 228, and 231 each coordinate 1-deoxy-D-xylulose 5-phosphate. E231 contacts Mn(2+).

Belongs to the DXR family. Mg(2+) serves as cofactor. Requires Mn(2+) as cofactor.

The enzyme catalyses 2-C-methyl-D-erythritol 4-phosphate + NADP(+) = 1-deoxy-D-xylulose 5-phosphate + NADPH + H(+). The protein operates within isoprenoid biosynthesis; isopentenyl diphosphate biosynthesis via DXP pathway; isopentenyl diphosphate from 1-deoxy-D-xylulose 5-phosphate: step 1/6. Inhibited by fosmidomycin. Its function is as follows. Catalyzes the NADPH-dependent rearrangement and reduction of 1-deoxy-D-xylulose-5-phosphate (DXP) to 2-C-methyl-D-erythritol 4-phosphate (MEP). The protein is 1-deoxy-D-xylulose 5-phosphate reductoisomerase of Synechococcus sp. (strain ATCC 27144 / PCC 6301 / SAUG 1402/1) (Anacystis nidulans).